A 198-amino-acid polypeptide reads, in one-letter code: Thymidine kinase (198 aa).

ATP-binding positions include 15-22 and 87-90; these read GCMFSGKT and DEAQ. Glu88 acts as the Proton acceptor in catalysis. Zn(2+) contacts are provided by Cys144, Cys147, Cys182, and His185.

It belongs to the thymidine kinase family. Homotetramer.

Its subcellular location is the cytoplasm. It catalyses the reaction thymidine + ATP = dTMP + ADP + H(+). This is Thymidine kinase from Coprothermobacter proteolyticus (strain ATCC 35245 / DSM 5265 / OCM 4 / BT).